The primary structure comprises 297 residues: Acetyl-coenzyme A carboxylase carboxyl transferase subunit beta (297 aa).

In terms of domain architecture, CoA carboxyltransferase N-terminal spans 25 to 294; sequence LWVKCPETGQ…LPPKGRLPRP (270 aa).

This sequence belongs to the AccD/PCCB family. Acetyl-CoA carboxylase is a heterohexamer composed of biotin carboxyl carrier protein (AccB), biotin carboxylase (AccC) and two subunits each of ACCase subunit alpha (AccA) and ACCase subunit beta (AccD).

The protein resides in the cytoplasm. The enzyme catalyses N(6)-carboxybiotinyl-L-lysyl-[protein] + acetyl-CoA = N(6)-biotinyl-L-lysyl-[protein] + malonyl-CoA. Its pathway is lipid metabolism; malonyl-CoA biosynthesis; malonyl-CoA from acetyl-CoA: step 1/1. Component of the acetyl coenzyme A carboxylase (ACC) complex. Biotin carboxylase (BC) catalyzes the carboxylation of biotin on its carrier protein (BCCP) and then the CO(2) group is transferred by the transcarboxylase to acetyl-CoA to form malonyl-CoA. The chain is Acetyl-coenzyme A carboxylase carboxyl transferase subunit beta from Xanthobacter autotrophicus (strain ATCC BAA-1158 / Py2).